The following is a 354-amino-acid chain: 3'-5' exonuclease (354 aa).

The segment at 1–120 (MERFLTKMPI…PSPEKEKPEK (120 aa)) is disordered. Composition is skewed to basic and acidic residues over residues 13 to 30 (KANE…ETPK) and 37 to 50 (KKDT…KENA). The span at 59-70 (TKGRPGRPAAKR) shows a compositional bias: basic residues. Basic and acidic residues predominate over residues 71 to 91 (KNLDTPDVKDEKIAMEEENPP). A phosphoserine mark is found at Ser104, Ser110, and Ser112. One can recognise a 3'-5' exonuclease domain in the interval 149 to 314 (WVEKQKDDVV…GQVIYRELER (166 aa)). Mg(2+) contacts are provided by Asp163, Glu165, and Asp301.

It belongs to the WRNexo family.

The protein localises to the nucleus. Its function is as follows. Has exonuclease activity on both single-stranded and duplex templates bearing overhangs, but not blunt ended duplex DNA, and cleaves in a 3'-5' direction. Essential for the formation of DNA replication focal centers. Has an important role in maintaining genome stability. In Drosophila simulans (Fruit fly), this protein is 3'-5' exonuclease.